The chain runs to 419 residues: Putative BTB/POZ domain-containing protein L85 (419 aa).

Positions 16–89 (TDLTIVLKDD…FYDKTSTNSE (74 aa)) constitute a BTB domain. A disordered region spans residues 250-290 (SSSNDSDEDASETESEHNSETESEHNSETESEHNSETESKH). The segment covering 263-290 (ESEHNSETESEHNSETESEHNSETESKH) has biased composition (basic and acidic residues).

The protein belongs to the mimivirus BTB/WD family.

This chain is Putative BTB/POZ domain-containing protein L85, found in Acanthamoeba polyphaga (Amoeba).